The primary structure comprises 347 residues: MDFELEPTLESIVQQDTLKWIFVGGKGGVGKTTTSSSIAVQLALNHPNDQFLLISTDPAHNLSDAFCQKFGKDARKVDGLSNLSCMEIDPEAAMSDLQQQAQQYNNDPNDPLKSMMNDMTGSIPGIDEALSFMEVLKHIKSQKVDENDDKDKISYRTIIFDTAPTGHTLRFLQLPSTLQKLLSKFQALSGKFGPMMSMLGGGNQQEMFDKLNEVQKNVTEVNEQFTNPDLTTFVCVCISEFLSLYETERMIQELMSYNMDVNSIVVNQLLFADDDEKPCKRCVSRWKMQKKYLDQMAELYEDYHLVKMPLLGTEIRGVENLKKFSKFLLTPYDPKVNGDLVTSLEEK.

26 to 33 (KGGVGKTT) contacts ATP. Aspartate 57 is a catalytic residue. 2 residues coordinate ATP: glutamate 240 and asparagine 267. Residues cysteine 279 and cysteine 282 each coordinate Zn(2+).

It belongs to the arsA ATPase family. In terms of assembly, homodimer. Component of the Golgi to ER traffic (GET) complex, which is composed of GET1, GET2 and GET3. Within the complex, GET1 and GET2 form a heterotetramer which is stabilized by phosphatidylinositol binding and which binds to the GET3 homodimer. Interacts with the chloride channel protein GEF1.

It localises to the cytoplasm. The protein resides in the endoplasmic reticulum. It is found in the golgi apparatus. Its function is as follows. ATPase required for the post-translational delivery of tail-anchored (TA) proteins to the endoplasmic reticulum. Recognizes and selectively binds the transmembrane domain of TA proteins in the cytosol. This complex then targets to the endoplasmic reticulum by membrane-bound receptors GET1 and GET2, where the tail-anchored protein is released for insertion. This process is regulated by ATP binding and hydrolysis. ATP binding drives the homodimer towards the closed dimer state, facilitating recognition of newly synthesized TA membrane proteins. ATP hydrolysis is required for insertion. Subsequently, the homodimer reverts towards the open dimer state, lowering its affinity for the GET1-GET2 receptor, and returning it to the cytosol to initiate a new round of targeting. Cooperates with the HDEL receptor ERD2 to mediate the ATP-dependent retrieval of resident ER proteins that contain a C-terminal H-D-E-L retention signal from the Golgi to the ER. Involved in low-level resistance to the oxyanions arsenite and arsenate, and in heat tolerance. The chain is ATPase GET3 from Scheffersomyces stipitis (strain ATCC 58785 / CBS 6054 / NBRC 10063 / NRRL Y-11545) (Yeast).